Here is a 523-residue protein sequence, read N- to C-terminus: Tubulin-specific chaperone E (523 aa).

The CAP-Gly domain maps to 31-75 (GEVSGHMGSWLGIEWDDGLRGKHNGIVDGKRYFQTQTPTGGSFIR). 7 LRR repeats span residues 155 to 180 (LTHL…IAQQ), 181 to 204 (LPSL…QITE), 209 to 232 (FRQL…MHTA), 235 to 258 (WPNI…DRTK), 260 to 284 (FKQL…KLGN), 285 to 310 (LTTL…DSQE), and 315 to 337 (FVSL…AFNE).

It belongs to the TBCE family.

It localises to the cytoplasm. Functionally, tubulin-folding protein which is required for the development of the neuronal microtubule network. Essential for the development and function of neuromuscular synapses. Likely to promote microtubule formation by acting in the negative regulation of the microtubule-severing protein spas. The sequence is that of Tubulin-specific chaperone E from Drosophila melanogaster (Fruit fly).